A 208-amino-acid chain; its full sequence is Protein Nef (208 aa).

A lipid anchor (N-myristoyl glycine; by host) is attached at G2. The residue at position 6 (S6) is a Phosphoserine; by host. The interval 16-51 (IRERMRRTPPTPPAAEGVGAVSQDLERRGAITSSNT) is disordered. The acidic; interacts with host PACS1 and PACS2; stabilizes the interaction of NEF/MHC-I with host AP1M1; necessary for MHC-I internalization stretch occupies residues 65–68 (EEDE). The interval 72–81 (PVRPQVPLRP) is SH3-binding; interaction with Src family tyrosine kinases. A PxxP; stabilizes the interaction of NEF/MHC-I with host AP1M1; necessary for MHC-I internalization motif is present at residues 75–78 (PQVP). Residues 111–127 (EILDLWVYHTQGYFPDW) are mediates dimerization, Nef-PTE1 interaction. Positions 151 to 183 (VDPEEVEKANEGENNCLLHPMSQHGMEDEDKEV) are binding to ATP6V1H. Residues 167 to 168 (LL) carry the Dileucine internalization motif; necessary for CD4 internalization motif. Residues 177–178 (ED) carry the Diacidic; necessary for CD4 internalization motif.

It belongs to the lentivirus primate group Nef protein family. As to quaternary structure, monomer; cytosolic form. Homodimer; membrane bound form. Interacts with Nef associated p21-activated kinase (PAK2); this interaction activates PAK2. Associates with the Nef-MHC-I-AP1 complex; this complex is required for MHC-I internalization. Interacts (via C-terminus) with host PI3-kinase. Interacts with host PACS1; this interaction seems to be weak. Interacts with host PACS2. Interacts with host LCK and MAPK3; these interactions inhibit the kinase activity of the latter. Interacts with host ATP6V1H; this interaction may play a role in CD4 endocytosis. Associates with the CD4-Nef-AP2 complex; this complex is required for CD4 internalization. Interacts with host AP2 subunit alpha and AP2 subunit sigma2. Interacts with TCR-zeta chain; this interaction up-regulates the Fas ligand (FasL) surface expression. Interacts with host HCK, LYN, and SRC; these interactions activate the Src family kinases. Interacts with MAP3K5; this interaction inhibits the Fas and TNFR-mediated death signals. Interacts with beta-COP and PTE1. Interacts with human RACK1; this increases Nef phosphorylation by PKC. Interacts with TP53; this interaction decreases the half-life of TP53, protecting the infected cell against p53-mediated apoptosis. Post-translationally, the virion-associated Nef proteins are cleaved by the viral protease to release the soluble C-terminal core protein. Nef is probably cleaved concomitantly with viral structural proteins on maturation of virus particles. Myristoylated. In terms of processing, phosphorylated on serine residues, probably by host PKCdelta and theta.

It is found in the host cell membrane. The protein localises to the virion. The protein resides in the secreted. It localises to the host Golgi apparatus membrane. Its function is as follows. Factor of infectivity and pathogenicity, required for optimal virus replication. Alters numerous pathways of T-lymphocyte function and down-regulates immunity surface molecules in order to evade host defense and increase viral infectivity. Alters the functionality of other immunity cells, like dendritic cells, monocytes/macrophages and NK cells. In infected CD4(+) T-lymphocytes, down-regulates the surface MHC-I, mature MHC-II, CD4, CD28, CCR5 and CXCR4 molecules. Mediates internalization and degradation of host CD4 through the interaction of with the cytoplasmic tail of CD4, the recruitment of AP-2 (clathrin adapter protein complex 2), internalization through clathrin coated pits, and subsequent transport to endosomes and lysosomes for degradation. Diverts host MHC-I molecules to the trans-Golgi network-associated endosomal compartments by an endocytic pathway to finally target them for degradation. MHC-I down-regulation may involve AP-1 (clathrin adapter protein complex 1) or possibly Src family kinase-ZAP70/Syk-PI3K cascade recruited by PACS2. In consequence infected cells are masked for immune recognition by cytotoxic T-lymphocytes. Decreasing the number of immune receptors also prevents reinfection by more HIV particles (superinfection). Down-regulates host SERINC3 and SERINC5 thereby excluding these proteins from the viral particles. Virion infectivity is drastically higher when SERINC3 or SERINC5 are excluded from the viral envelope, because these host antiviral proteins impair the membrane fusion event necessary for subsequent virion penetration. In terms of biological role, bypasses host T-cell signaling by inducing a transcriptional program nearly identical to that of anti-CD3 cell activation. Interaction with TCR-zeta chain up-regulates the Fas ligand (FasL). Increasing surface FasL molecules and decreasing surface MHC-I molecules on infected CD4(+) cells send attacking cytotoxic CD8+ T-lymphocytes into apoptosis. Functionally, plays a role in optimizing the host cell environment for viral replication without causing cell death by apoptosis. Protects the infected cells from apoptosis in order to keep them alive until the next virus generation is ready to strike. Inhibits the Fas and TNFR-mediated death signals by blocking MAP3K5/ASK1. Decreases the half-life of TP53, protecting the infected cell against p53-mediated apoptosis. Inhibits the apoptotic signals regulated by the Bcl-2 family proteins through the formation of a Nef/PI3-kinase/PAK2 complex that leads to activation of PAK2 and induces phosphorylation of host BAD. Its function is as follows. Extracellular Nef protein targets CD4(+) T-lymphocytes for apoptosis by interacting with CXCR4 surface receptors. The chain is Protein Nef from Human immunodeficiency virus type 1 group M subtype F1 (isolate 93BR020) (HIV-1).